The sequence spans 338 residues: Phosphatidylglycerol--prolipoprotein diacylglyceryl transferase (338 aa).

The next 4 membrane-spanning stretches (helical) occupy residues 24–44 (WYGL…SYQV), 67–87 (LFIW…TLVY), 115–135 (GFQG…VILW), and 141–161 (FKFA…YTFG). Arg-162 serves as a coordination point for a 1,2-diacyl-sn-glycero-3-phospho-(1'-sn-glycerol). 3 helical membrane passes run 224-244 (PSQL…LWLL), 252-272 (GFLV…IEYF), and 304-324 (GQIL…ILYL).

Belongs to the Lgt family.

It is found in the cell inner membrane. The catalysed reaction is L-cysteinyl-[prolipoprotein] + a 1,2-diacyl-sn-glycero-3-phospho-(1'-sn-glycerol) = an S-1,2-diacyl-sn-glyceryl-L-cysteinyl-[prolipoprotein] + sn-glycerol 1-phosphate + H(+). It functions in the pathway protein modification; lipoprotein biosynthesis (diacylglyceryl transfer). In terms of biological role, catalyzes the transfer of the diacylglyceryl group from phosphatidylglycerol to the sulfhydryl group of the N-terminal cysteine of a prolipoprotein, the first step in the formation of mature lipoproteins. This chain is Phosphatidylglycerol--prolipoprotein diacylglyceryl transferase, found in Treponema denticola (strain ATCC 35405 / DSM 14222 / CIP 103919 / JCM 8153 / KCTC 15104).